Consider the following 182-residue polypeptide: NADH-quinone oxidoreductase subunit I (182 aa).

4Fe-4S ferredoxin-type domains lie at 52 to 82 (LTRD…LQKA) and 92 to 121 (EFFR…LTPD). 8 residues coordinate [4Fe-4S] cluster: C62, C65, C68, C72, C101, C104, C107, and C111.

It belongs to the complex I 23 kDa subunit family. As to quaternary structure, NDH-1 is composed of 13 different subunits. Subunits NuoA, H, J, K, L, M, N constitute the membrane sector of the complex. [4Fe-4S] cluster is required as a cofactor.

The protein resides in the cell inner membrane. The enzyme catalyses a quinone + NADH + 5 H(+)(in) = a quinol + NAD(+) + 4 H(+)(out). NDH-1 shuttles electrons from NADH, via FMN and iron-sulfur (Fe-S) centers, to quinones in the respiratory chain. The immediate electron acceptor for the enzyme in this species is believed to be ubiquinone. Couples the redox reaction to proton translocation (for every two electrons transferred, four hydrogen ions are translocated across the cytoplasmic membrane), and thus conserves the redox energy in a proton gradient. The chain is NADH-quinone oxidoreductase subunit I from Pseudomonas entomophila (strain L48).